Reading from the N-terminus, the 419-residue chain is L-rhamnose isomerase (419 aa).

Mn(2+) is bound by residues H262, D294, and D296.

This sequence belongs to the rhamnose isomerase family. As to quaternary structure, homotetramer. It depends on Mn(2+) as a cofactor.

The protein resides in the cytoplasm. It catalyses the reaction L-rhamnopyranose = L-rhamnulose. The protein operates within carbohydrate degradation; L-rhamnose degradation; glycerone phosphate from L-rhamnose: step 1/3. Its function is as follows. Catalyzes the interconversion of L-rhamnose and L-rhamnulose. This is L-rhamnose isomerase from Salmonella agona (strain SL483).